The following is a 408-amino-acid chain: MNDTVKKPTGGRGDDPLPAGAALSAVAPHEPVSVVLAGGGTAGHVEPAMAVADALKALDPNVRITSLGTARGLETRLVPERGYDLELITPVPLPRKPTGDLARLPSRVWRAVRETRAVLHAVDADVVIGFGGYVALPAYLAARGVSPRKPRVPVVIHEANASAGLANRVGARTAQRVLSAVADCGLPGAEVVGVPVREAITSLDRAAVRAEARRHFGFADDARVLLVFGGSQGAASLNRAVSGAAAQLAAAGVSVLHAHGPKNTLDLREPQPGDPPYVAVPYLDRMDLAYAAADLVICRSGAMTVAEVSAVGLPAIYVPLPIGNGEQRLNALPVVNAGGGMVVADADLTPELVAREVAGLVGDPPRLAAMTTAAARVGHPDAARRVAQAALDIGRTARRARGATGGRP.

The segment at 1-20 (MNDTVKKPTGGRGDDPLPAG) is disordered. UDP-N-acetyl-alpha-D-glucosamine-binding positions include 41–43 (TAG), Asn-160, Arg-197, Ser-231, and Gln-327.

It belongs to the glycosyltransferase 28 family. MurG subfamily.

It is found in the cell membrane. The enzyme catalyses di-trans,octa-cis-undecaprenyl diphospho-N-acetyl-alpha-D-muramoyl-L-alanyl-D-glutamyl-meso-2,6-diaminopimeloyl-D-alanyl-D-alanine + UDP-N-acetyl-alpha-D-glucosamine = di-trans,octa-cis-undecaprenyl diphospho-[N-acetyl-alpha-D-glucosaminyl-(1-&gt;4)]-N-acetyl-alpha-D-muramoyl-L-alanyl-D-glutamyl-meso-2,6-diaminopimeloyl-D-alanyl-D-alanine + UDP + H(+). It functions in the pathway cell wall biogenesis; peptidoglycan biosynthesis. Cell wall formation. Catalyzes the transfer of a GlcNAc subunit on undecaprenyl-pyrophosphoryl-MurNAc-pentapeptide (lipid intermediate I) to form undecaprenyl-pyrophosphoryl-MurNAc-(pentapeptide)GlcNAc (lipid intermediate II). In Mycobacterium avium (strain 104), this protein is UDP-N-acetylglucosamine--N-acetylmuramyl-(pentapeptide) pyrophosphoryl-undecaprenol N-acetylglucosamine transferase.